We begin with the raw amino-acid sequence, 92 residues long: Alpha-conotoxin VxXXA (92 aa).

The signal sequence occupies residues 1 to 24 (MPKLEMMLLVLLIFPLSYFIAAGG). Positions 25-45 (QVVQVDRRGDGLAGYLQRGDR) are excised as a propeptide. Residues proline 55, proline 70, and proline 74 each carry the 4-hydroxyproline; partial modification. Intrachain disulfides connect cysteine 63-cysteine 72, cysteine 68-cysteine 80, cysteine 73-cysteine 90, and cysteine 78-cysteine 92.

This sequence belongs to the conotoxin D superfamily. As to quaternary structure, homodimer or pseudo-homodimer. Three dimers exist: homodimer of VxXXA, pseudo-homodimer of both VxXXA and [hydroxyPro-74]VxXXA and homodimer of [hydroxyPro-74]VxXXA. These three components exist in a 1:2:1 ratio. Post-translationally, vxXXA stands for the form with the Pro-55 hydroxylated. A second major form has both Pro-55 and Pro-74 hydroxylated. The two major forms VxXXA and [hydroxyPro-74]VxXXA exist in a 1:1 ratio. In terms of processing, minor forms are [hydroxyPro-70,hydroxyPro-74]VxXXA and [Pro-55]VxXXA. As to expression, expressed by the venom duct.

The protein localises to the secreted. Alpha-conotoxins act on postsynaptic membranes, they bind to the nicotinic acetylcholine receptors (nAChR) and thus inhibit them. Through its two C-terminal domains, this homodimeric protein would bind to two nAChR allosteric sites, located outside the nAChR C-loop of the principal binding face and at the adjacent binding interface in a clockwise direction. This toxin specifically blocks mammalian neuronal nAChR of the alpha-7/CHRNA7, alpha-3-beta-2/CHRNA3-CHRNB2 (IC(50)=370 nM) and alpha-4-beta-2/CHRNA4-CHRNB2 subtypes. VxXXB inhibits alpha-7/CHRNA7 and alpha-3-beta-2/CHRNA3-CHRNB2 nAChR subtypes with the highest efficiency, followed by VxXXA and VxXXC. VxXXB and VxXXC inhibit the alpha-4-beta-2/CHRNA4-CHRNB2 nAChR subtype more efficiently than VxXXA. The protein is Alpha-conotoxin VxXXA of Conus vexillum (Flag cone).